The following is a 1164-amino-acid chain: DNA-directed RNA polymerase 132 kDa polypeptide (1164 aa).

It belongs to the RNA polymerase beta chain family. In terms of assembly, the DNA-dependent RNA polymerase used for intermediate and late genes expression consists of eight subunits (147) kDa, (133) kDa, (35) kDa, (30) kDa, (22) kDa, (19) kDa, (18) kDa and (7) kDa totalling more than 500 kDa in mass. The same holoenzyme, with the addition of the transcription-specificity factor RAP94, is used for early gene expression.

It is found in the virion. It catalyses the reaction RNA(n) + a ribonucleoside 5'-triphosphate = RNA(n+1) + diphosphate. In terms of biological role, part of the DNA-dependent RNA polymerase which catalyzes the transcription of viral DNA into RNA using the four ribonucleoside triphosphates as substrates. Responsible for the transcription of early, intermediate and late genes. DNA-dependent RNA polymerase associates with the early transcription factor (ETF), itself composed of D6 and A7, thereby allowing the early genes transcription. Late transcription, and probably also intermediate transcription, require newly synthesized RNA polymerase. The polypeptide is DNA-directed RNA polymerase 132 kDa polypeptide (RPO132) (Monkeypox virus (strain Zaire-96-I-16) (MPX)).